The chain runs to 258 residues: Flagellin B3 (258 aa).

Residues 1 to 8 (MRFLKKRG) constitute a propeptide that is removed on maturation.

It belongs to the archaeal flagellin family.

The protein resides in the archaeal flagellum. Its function is as follows. Flagellin is the subunit protein which polymerizes to form the filaments of archaeal flagella. The polypeptide is Flagellin B3 (flaB3) (Thermococcus kodakarensis (strain ATCC BAA-918 / JCM 12380 / KOD1) (Pyrococcus kodakaraensis (strain KOD1))).